The primary structure comprises 242 residues: Dickkopf-like protein 1 (242 aa).

The signal sequence occupies residues 1–30; the sequence is MGEASPPAPARRHLLVLLLLLSTLVIPSAA. N97 and N112 each carry an N-linked (GlcNAc...) asparagine glycan.

As to quaternary structure, interacts with SLXL1; Co-localize in seminiferous tubules. Interacts with SLY. N-glycosylated during spermatogenesis. Not N-glycosylated in mature sperm. As to expression, more highly expressed in adult testis than in fetal testis. Exclusively expressed in the testis (at protein level). Intense expression in stages II, III and IV of spermatogenesis, whereas expression is lower in stage I.

Its subcellular location is the secreted. It localises to the cytoplasmic vesicle. The protein resides in the secretory vesicle. The protein localises to the acrosome. Functionally, involved in fertilization by facilitating sperm penetration of the zona pellucida. May promote spermatocyte apoptosis, thereby limiting sperm production. In adults, may reduce testosterone synthesis in Leydig cells. Is not essential either for development or fertility. The chain is Dickkopf-like protein 1 from Homo sapiens (Human).